Consider the following 202-residue polypeptide: uncharacterized protein (202 aa).

Residues 1 to 6 lie on the Cytoplasmic side of the membrane; it reads MITDFL. A helical; Signal-anchor for type II membrane protein transmembrane segment spans residues 7 to 23; it reads LAFSILAVSTTLGVSNL. Topologically, residues 24 to 202 are extracellular; the sequence is NKQCRDLLQC…KNGKTRGHSG (179 aa). The N-linked (GlcNAc...) asparagine glycan is linked to N53.

The protein resides in the membrane. This is an uncharacterized protein from Caenorhabditis elegans.